We begin with the raw amino-acid sequence, 946 residues long: Leucine--tRNA ligase (946 aa).

The short motif at 43-53 is the 'HIGH' region element; sequence PYPNGTIHIGH. Residues 638–642 carry the 'KMSKS' region motif; it reads KMSKS. K641 is a binding site for ATP.

This sequence belongs to the class-I aminoacyl-tRNA synthetase family.

The protein localises to the cytoplasm. It carries out the reaction tRNA(Leu) + L-leucine + ATP = L-leucyl-tRNA(Leu) + AMP + diphosphate. The polypeptide is Leucine--tRNA ligase (Pyrobaculum calidifontis (strain DSM 21063 / JCM 11548 / VA1)).